The primary structure comprises 434 residues: Nicotinate phosphoribosyltransferase (434 aa).

A Phosphohistidine; by autocatalysis modification is found at His242.

This sequence belongs to the NAPRTase family. In terms of processing, transiently phosphorylated on a His residue during the reaction cycle. Phosphorylation strongly increases the affinity for substrates and increases the rate of nicotinate D-ribonucleotide production. Dephosphorylation regenerates the low-affinity form of the enzyme, leading to product release.

It catalyses the reaction nicotinate + 5-phospho-alpha-D-ribose 1-diphosphate + ATP + H2O = nicotinate beta-D-ribonucleotide + ADP + phosphate + diphosphate. It participates in cofactor biosynthesis; NAD(+) biosynthesis; nicotinate D-ribonucleotide from nicotinate: step 1/1. In terms of biological role, catalyzes the synthesis of beta-nicotinate D-ribonucleotide from nicotinate and 5-phospho-D-ribose 1-phosphate at the expense of ATP. This is Nicotinate phosphoribosyltransferase from Bartonella quintana (strain Toulouse) (Rochalimaea quintana).